We begin with the raw amino-acid sequence, 118 residues long: CLAVATA3/ESR (CLE)-related protein 12 (118 aa).

The signal sequence occupies residues 1 to 35 (MLRISSSSSMALKFSQILFIVLWLSLFFLLLHHLY). Composition is skewed to basic and acidic residues over residues 75–91 (TPFH…RSGE) and 98–108 (IDPRYGVEKRR). Residues 75–118 (TPFHSRDNSRHNHRSGEQYDGDEIDPRYGVEKRRVPSGPNPLHH) are disordered. A hydroxyproline mark is found at Pro-110 and Pro-113. Pro-113 carries an O-linked (Ara...) hydroxyproline glycan.

Belongs to the CLV3/ESR signal peptide family. The O-glycosylation (arabinosylation) of the hydroxyproline Pro-113 enhances binding affinity of the CLE12p peptide for its receptor. As to expression, mostly expressed in seedlings, roots, flowers, stems and apex, and, to a lower extent, in leaves and siliques.

The protein localises to the secreted. The protein resides in the extracellular space. Extracellular signal peptide that regulates cell fate. Represses root apical meristem maintenance. The chain is CLAVATA3/ESR (CLE)-related protein 12 from Arabidopsis thaliana (Mouse-ear cress).